The sequence spans 411 residues: Arginine deiminase (411 aa).

Cys-401 acts as the Amidino-cysteine intermediate in catalysis.

It belongs to the arginine deiminase family. Glycosylated.

It localises to the cytoplasm. The enzyme catalyses L-arginine + H2O = L-citrulline + NH4(+). Its pathway is amino-acid degradation; L-arginine degradation via ADI pathway; carbamoyl phosphate from L-arginine: step 1/2. This is Arginine deiminase (arcA) from Streptococcus pyogenes serotype M1.